An 81-amino-acid chain; its full sequence is Small ribosomal subunit protein bS16 (81 aa).

The protein belongs to the bacterial ribosomal protein bS16 family.

In Treponema denticola (strain ATCC 35405 / DSM 14222 / CIP 103919 / JCM 8153 / KCTC 15104), this protein is Small ribosomal subunit protein bS16.